Consider the following 478-residue polypeptide: Sulfate adenylyltransferase subunit 1 (478 aa).

The tr-type G domain maps to Lys-24–Asp-240. Residues Gly-33–Ser-40 form a G1 region. Gly-33–Ser-40 lines the GTP pocket. Positions Gly-91–Asp-95 are G2. Positions Asp-112–Gly-115 are G3. GTP is bound by residues Asp-112–His-116 and Asn-167–Asp-170. The segment at Asn-167–Asp-170 is G4. The interval Ser-206–Leu-208 is G5.

This sequence belongs to the TRAFAC class translation factor GTPase superfamily. Classic translation factor GTPase family. CysN/NodQ subfamily. Heterodimer composed of CysD, the smaller subunit, and CysN.

It carries out the reaction sulfate + ATP + H(+) = adenosine 5'-phosphosulfate + diphosphate. It functions in the pathway sulfur metabolism; hydrogen sulfide biosynthesis; sulfite from sulfate: step 1/3. With CysD forms the ATP sulfurylase (ATPS) that catalyzes the adenylation of sulfate producing adenosine 5'-phosphosulfate (APS) and diphosphate, the first enzymatic step in sulfur assimilation pathway. APS synthesis involves the formation of a high-energy phosphoric-sulfuric acid anhydride bond driven by GTP hydrolysis by CysN coupled to ATP hydrolysis by CysD. The polypeptide is Sulfate adenylyltransferase subunit 1 (Aliivibrio salmonicida (strain LFI1238) (Vibrio salmonicida (strain LFI1238))).